The primary structure comprises 279 residues: Calcium-activated potassium channel subunit beta-3 (279 aa).

Residues 1-60 (MDFSPSSELGFHFVAFILLTRHRTAFPASGKKRETDYSDGDPLDVHKRLPSSAGEDRAVM) lie on the Cytoplasmic side of the membrane. Residues 61–81 (LGFAMMGFSVLMFFLLGTTIL) traverse the membrane as a helical segment. The Extracellular portion of the chain corresponds to 82–207 (KPFMLSIQRE…DVILIKKYDQ (126 aa)). Asparagine 131 carries an N-linked (GlcNAc...) asparagine glycan. A helical membrane pass occupies residues 208–228 (MAIFHCLFWPSLTLLGGALIV). The Cytoplasmic portion of the chain corresponds to 229–279 (GMVRLTQHLSLLCEKYSTVVRDEVGGKVPYIEQHQFKLCIMRRSKGRAEKS).

It belongs to the KCNMB (TC 8.A.14.1) family. KCNMB3 subfamily. Interacts with KCNMA1 tetramer. There are probably 4 molecules of KCMNB3 per KCNMA1 tetramer. N-glycosylated. In terms of processing, the extracellular domain contains disulfide bond essential for the gating mechanism. As to expression, isoform 1, isoform 3 and isoform 4 are widely expressed. Isoform 2 is expressed placenta, pancreas, kidney and heart. Isoform 1 and isoform 3 are highly expressed in pancreas and testis.

It localises to the membrane. In terms of biological role, regulatory subunit of the calcium activated potassium KCNMA1 (maxiK) channel. Modulates the calcium sensitivity and gating kinetics of KCNMA1, thereby contributing to KCNMA1 channel diversity. Alters the functional properties of the current expressed by the KCNMA1 channel. Isoform 2, isoform 3 and isoform 4 partially inactivate the current of KCNBMA. Isoform 4 induces a fast and incomplete inactivation of KCNMA1 channel that is detectable only at large depolarizations. In contrast, isoform 1 does not induce detectable inactivation of KCNMA1. Two or more subunits of KCNMB3 are required to block the KCNMA1 tetramer. The sequence is that of Calcium-activated potassium channel subunit beta-3 (KCNMB3) from Homo sapiens (Human).